A 470-amino-acid polypeptide reads, in one-letter code: AAA-ATPase At5g40000 (470 aa).

Residues 1-30 (MMMMGDSFGSIGSSMASLFFLWATIQQIFP) form the signal peptide. Residue 248–255 (GPPGTGKS) participates in ATP binding.

The protein belongs to the AAA ATPase family. BCS1 subfamily. Mg(2+) serves as cofactor.

The catalysed reaction is ATP + H2O = ADP + phosphate + H(+). This Arabidopsis thaliana (Mouse-ear cress) protein is AAA-ATPase At5g40000.